Consider the following 950-residue polypeptide: Lon protease homolog, mitochondrial (950 aa).

Residues 1–65 constitute a mitochondrion transit peptide; the sequence is MAASTGYVRL…VPMGGGQWRG (65 aa). Disordered stretches follow at residues 67–94 and 212–243; these read WDAGSRGGSDETSEGGVEDGATASSGEG and PEGLEPEAENKQKSRRKLKRGKKEVGDELGAK. Residues 112 to 360 enclose the Lon N-terminal domain; it reads LPLIAISRNP…KALSLLKKEF (249 aa). Basic residues predominate over residues 224-233; it reads KSRRKLKRGK. 513 to 520 contacts ATP; sequence GPPGVGKT. Positions 749–939 constitute a Lon proteolytic domain; sequence VTPPGVVMGL…RDIFRIAFPL (191 aa). Catalysis depends on residues S845 and K888.

Belongs to the peptidase S16 family. As to quaternary structure, homohexamer. Organized in a ring with a central cavity. The ATP-binding and proteolytic domains (AP-domain) form a hexameric chamber, while the N-terminal domain is arranged as a trimer of dimers. DNA and RNA binding is stimulated by substrate and inhibited by ATP binding. Interacts with TWNK and mitochondrial DNA polymerase subunit POLG.

Its subcellular location is the mitochondrion matrix. It carries out the reaction Hydrolysis of proteins in presence of ATP.. ATP-dependent serine protease that mediates the selective degradation of misfolded, unassembled or oxidatively damaged polypeptides as well as certain short-lived regulatory proteins in the mitochondrial matrix. Endogenous substrates include mitochondrial steroidogenic acute regulatory (StAR) protein, DELE1, helicase Twinkle (TWNK) and the large ribosomal subunit protein MRPL32/bL32m. MRPL32/bL32m is protected from degradation by LONP1 when it is bound to a nucleic acid (RNA), but TWNK is not. May also have a chaperone function in the assembly of inner membrane protein complexes. Participates in the regulation of mitochondrial gene expression and in the maintenance of the integrity of the mitochondrial genome. Binds to mitochondrial promoters and RNA in a single-stranded, site-specific, and strand-specific manner. May regulate mitochondrial DNA replication and/or gene expression using site-specific, single-stranded DNA binding to target the degradation of regulatory proteins binding to adjacent sites in mitochondrial promoters. This is Lon protease homolog, mitochondrial (Lonp1) from Rattus norvegicus (Rat).